The chain runs to 299 residues: ATP phosphoribosyltransferase (299 aa).

Belongs to the ATP phosphoribosyltransferase family. Long subfamily. Equilibrium between an active dimeric form, an inactive hexameric form and higher aggregates. Interconversion between the various forms is largely reversible and is influenced by the natural substrates and inhibitors of the enzyme. The cofactor is Mg(2+).

Its subcellular location is the cytoplasm. The enzyme catalyses 1-(5-phospho-beta-D-ribosyl)-ATP + diphosphate = 5-phospho-alpha-D-ribose 1-diphosphate + ATP. It functions in the pathway amino-acid biosynthesis; L-histidine biosynthesis; L-histidine from 5-phospho-alpha-D-ribose 1-diphosphate: step 1/9. Its activity is regulated as follows. Feedback inhibited by histidine. Catalyzes the condensation of ATP and 5-phosphoribose 1-diphosphate to form N'-(5'-phosphoribosyl)-ATP (PR-ATP). Has a crucial role in the pathway because the rate of histidine biosynthesis seems to be controlled primarily by regulation of HisG enzymatic activity. The sequence is that of ATP phosphoribosyltransferase from Sodalis glossinidius (strain morsitans).